Here is a 449-residue protein sequence, read N- to C-terminus: Phosphoglucosamine mutase (449 aa).

S99 (phosphoserine intermediate) is an active-site residue. Residues S99, D239, D241, and D243 each contribute to the Mg(2+) site. S99 carries the phosphoserine modification.

This sequence belongs to the phosphohexose mutase family. Mg(2+) is required as a cofactor. In terms of processing, activated by phosphorylation.

The enzyme catalyses alpha-D-glucosamine 1-phosphate = D-glucosamine 6-phosphate. In terms of biological role, catalyzes the conversion of glucosamine-6-phosphate to glucosamine-1-phosphate. This chain is Phosphoglucosamine mutase, found in Finegoldia magna (strain ATCC 29328 / DSM 20472 / WAL 2508) (Peptostreptococcus magnus).